The sequence spans 859 residues: Leucine--tRNA ligase (859 aa).

The short motif at 42–52 is the 'HIGH' region element; that stretch reads PYPSGRLHMGH. The short motif at 618 to 622 is the 'KMSKS' region element; that stretch reads KMSKS. Position 621 (K621) interacts with ATP.

It belongs to the class-I aminoacyl-tRNA synthetase family.

The protein resides in the cytoplasm. It catalyses the reaction tRNA(Leu) + L-leucine + ATP = L-leucyl-tRNA(Leu) + AMP + diphosphate. This chain is Leucine--tRNA ligase, found in Shewanella putrefaciens (strain CN-32 / ATCC BAA-453).